The chain runs to 337 residues: Phosphate acyltransferase (337 aa).

Belongs to the PlsX family. Homodimer. Probably interacts with PlsY.

The protein localises to the cytoplasm. The enzyme catalyses a fatty acyl-[ACP] + phosphate = an acyl phosphate + holo-[ACP]. It functions in the pathway lipid metabolism; phospholipid metabolism. Functionally, catalyzes the reversible formation of acyl-phosphate (acyl-PO(4)) from acyl-[acyl-carrier-protein] (acyl-ACP). This enzyme utilizes acyl-ACP as fatty acyl donor, but not acyl-CoA. The chain is Phosphate acyltransferase from Acidobacterium capsulatum (strain ATCC 51196 / DSM 11244 / BCRC 80197 / JCM 7670 / NBRC 15755 / NCIMB 13165 / 161).